A 160-amino-acid polypeptide reads, in one-letter code: Thioredoxin-like protein 4A homolog (160 aa).

The segment at 132-160 (KFLKKKKKKKNKKKQKKKIKKIKKKIKNN) is disordered. Basic residues predominate over residues 133–160 (FLKKKKKKKNKKKQKKKIKKIKKKIKNN).

Belongs to the DIM1 family. In terms of assembly, component of the precatalytic spliceosome (spliceosome B complex). Component of the U5 snRNP complex. Component of the U4/U6-U5 tri-snRNP complex.

The protein resides in the nucleus. In terms of biological role, plays a role in pre-mRNA splicing as component of the U5 snRNP and U4/U6-U5 tri-snRNP complexes that are involved in spliceosome assembly, and as component of the precatalytic spliceosome (spliceosome B complex). This is Thioredoxin-like protein 4A homolog (txnl4a) from Dictyostelium discoideum (Social amoeba).